The sequence spans 394 residues: Chorismate synthase (394 aa).

Positions 42 and 48 each coordinate NADP(+). FMN-binding positions include 137–139 (RAS), 258–259 (QA), Gly302, 317–321 (KPIAT), and Arg343.

It belongs to the chorismate synthase family. In terms of assembly, homotetramer. FMNH2 is required as a cofactor.

It carries out the reaction 5-O-(1-carboxyvinyl)-3-phosphoshikimate = chorismate + phosphate. It participates in metabolic intermediate biosynthesis; chorismate biosynthesis; chorismate from D-erythrose 4-phosphate and phosphoenolpyruvate: step 7/7. Its function is as follows. Catalyzes the anti-1,4-elimination of the C-3 phosphate and the C-6 proR hydrogen from 5-enolpyruvylshikimate-3-phosphate (EPSP) to yield chorismate, which is the branch point compound that serves as the starting substrate for the three terminal pathways of aromatic amino acid biosynthesis. This reaction introduces a second double bond into the aromatic ring system. This Streptomyces avermitilis (strain ATCC 31267 / DSM 46492 / JCM 5070 / NBRC 14893 / NCIMB 12804 / NRRL 8165 / MA-4680) protein is Chorismate synthase.